Here is a 98-residue protein sequence, read N- to C-terminus: Citrate lyase acyl carrier protein 1 (98 aa).

S14 carries the O-(phosphoribosyl dephospho-coenzyme A)serine modification.

It belongs to the CitD family. As to quaternary structure, oligomer with a subunit composition of (alpha,beta,gamma)6.

The protein localises to the cytoplasm. Functionally, covalent carrier of the coenzyme of citrate lyase. The sequence is that of Citrate lyase acyl carrier protein 1 from Salmonella paratyphi A (strain ATCC 9150 / SARB42).